A 209-amino-acid polypeptide reads, in one-letter code: Thiamine-phosphate synthase (209 aa).

4-amino-2-methyl-5-(diphosphooxymethyl)pyrimidine contacts are provided by residues Gln36–Lys40 and Asn68. Mg(2+) is bound by residues Asp69 and Asp87. A 4-amino-2-methyl-5-(diphosphooxymethyl)pyrimidine-binding site is contributed by Thr106. Ser133–Thr135 lines the 2-[(2R,5Z)-2-carboxy-4-methylthiazol-5(2H)-ylidene]ethyl phosphate pocket. Lys136 contacts 4-amino-2-methyl-5-(diphosphooxymethyl)pyrimidine. Residue Gly163 coordinates 2-[(2R,5Z)-2-carboxy-4-methylthiazol-5(2H)-ylidene]ethyl phosphate.

It belongs to the thiamine-phosphate synthase family. Mg(2+) is required as a cofactor.

It catalyses the reaction 2-[(2R,5Z)-2-carboxy-4-methylthiazol-5(2H)-ylidene]ethyl phosphate + 4-amino-2-methyl-5-(diphosphooxymethyl)pyrimidine + 2 H(+) = thiamine phosphate + CO2 + diphosphate. The catalysed reaction is 2-(2-carboxy-4-methylthiazol-5-yl)ethyl phosphate + 4-amino-2-methyl-5-(diphosphooxymethyl)pyrimidine + 2 H(+) = thiamine phosphate + CO2 + diphosphate. The enzyme catalyses 4-methyl-5-(2-phosphooxyethyl)-thiazole + 4-amino-2-methyl-5-(diphosphooxymethyl)pyrimidine + H(+) = thiamine phosphate + diphosphate. It participates in cofactor biosynthesis; thiamine diphosphate biosynthesis; thiamine phosphate from 4-amino-2-methyl-5-diphosphomethylpyrimidine and 4-methyl-5-(2-phosphoethyl)-thiazole: step 1/1. Its function is as follows. Condenses 4-methyl-5-(beta-hydroxyethyl)thiazole monophosphate (THZ-P) and 2-methyl-4-amino-5-hydroxymethyl pyrimidine pyrophosphate (HMP-PP) to form thiamine monophosphate (TMP). The polypeptide is Thiamine-phosphate synthase (Pseudomonas aeruginosa (strain LESB58)).